The chain runs to 166 residues: Putative esterase sll0410 (166 aa).

Residue Asp45 is part of the active site.

Belongs to the 4-hydroxybenzoyl-CoA thioesterase family.

This chain is Putative esterase sll0410, found in Synechocystis sp. (strain ATCC 27184 / PCC 6803 / Kazusa).